Reading from the N-terminus, the 541-residue chain is Arginine--tRNA ligase (541 aa).

The 'HIGH' region motif lies at 119-129 (ANPTGPLHIGH).

This sequence belongs to the class-I aminoacyl-tRNA synthetase family. As to quaternary structure, monomer.

It localises to the cytoplasm. The catalysed reaction is tRNA(Arg) + L-arginine + ATP = L-arginyl-tRNA(Arg) + AMP + diphosphate. In Helicobacter pylori (strain HPAG1), this protein is Arginine--tRNA ligase.